A 243-amino-acid chain; its full sequence is tRNA1(Val) (adenine(37)-N6)-methyltransferase (243 aa).

Belongs to the methyltransferase superfamily. tRNA (adenine-N(6)-)-methyltransferase family.

The protein resides in the cytoplasm. It carries out the reaction adenosine(37) in tRNA1(Val) + S-adenosyl-L-methionine = N(6)-methyladenosine(37) in tRNA1(Val) + S-adenosyl-L-homocysteine + H(+). Specifically methylates the adenine in position 37 of tRNA(1)(Val) (anticodon cmo5UAC). This chain is tRNA1(Val) (adenine(37)-N6)-methyltransferase, found in Shewanella loihica (strain ATCC BAA-1088 / PV-4).